The following is a 558-amino-acid chain: DNA ligase B (558 aa).

The active-site N6-AMP-lysine intermediate is the Lys-126.

The protein belongs to the NAD-dependent DNA ligase family. LigB subfamily.

It carries out the reaction NAD(+) + (deoxyribonucleotide)n-3'-hydroxyl + 5'-phospho-(deoxyribonucleotide)m = (deoxyribonucleotide)n+m + AMP + beta-nicotinamide D-nucleotide.. In terms of biological role, catalyzes the formation of phosphodiester linkages between 5'-phosphoryl and 3'-hydroxyl groups in double-stranded DNA using NAD as a coenzyme and as the energy source for the reaction. This chain is DNA ligase B, found in Pseudomonas fluorescens (strain Pf0-1).